The chain runs to 2507 residues: MEISETSHNESGPPVQENGIVEIPVEEGEEVNDEESNMETVDLGLDDSAADASSPSVFKNIDDEAPGDPSDAAKKEEDSEEIVVPSVLAPTPSQEVSPPNAIESLPPLPEGKELELEDDVTSSLPRLLSKTTLIHSNEEGADETIQRLVTVLHSNSPNTDRTQVVDNLFNLLVGGHFDQESKFVIEDAANVDHMLTLLSHCDYDLQNEIWSLFLAVMKKSNRNLEACTRVGLISKVLDILPEAPPLLADLLVQIIAALVAYSINVKQTKHLLRALKSTKEQWPPNSLKLLHVLKEMPQHDSADVFFSFPGKDQSGIILPPIKTMPYQQGWTFATWLRMEPLNSVTFEKEQPVLYSFRTSKGVGYSCHFTGNCLVVNVEKTKGKEQSRCVRAELGARKWHHIAIAHCYSRWGRSDIKCFIDGQLAETIELSWVVTSATNWDRCSIGVSADGTANSAFCGQMGAMYLFAEALTLQQANSLFCLGPVYQSTFKHDSETSLPEGYKKHLFDGHLHSSLVFAYCPKNCHGQLCLYTPPKTAASTYFVQIPHAVMKEGVEVITTHSIHKSLQSVGGIQILLPLFAQIDLPSSNDNSIDGEVCQTLLSLIALLLSSSQSSQQQLFHSKGFLIISSCLQKASPSHLSMKVLEQLIHIAKFLLRCPAGGPLLKHLFDYILFNPKLWIRARPEVQVHLYQYLATDFLANNNFSQMLRRVPTVIEMCHTLKHFYWLALPQTVSDYTIEERPENFATADIVAIRSSILTFINRIIIASAGPEEEERVRDQEVHTLLNLLATVREDDNLYDVLALVTRLLAEHPAIMIPAIDKNKALGIIFNLLAAPNELIRIPALKILGFFLSRSTLKRKTESMGNQNLFSLIGERLLSHKKVLSLPTYNVLLEILVEQMTPTFTYACHQPAQPEWKFENPHLLKVIAHVISQCEESENIVQIKKCFLIDIINLCRESKENRRTILQMSVWQDWLIGLAYVFHTTESQNEVSELVWEAFSILLHHALRNEYGGWRVWVDTLAIAHSKVSFEKFKRKLAEAKIKAERSESGGEEAKMEPTPIYRAPEFAWSDVHVRLLADLLSGIERVVDEWKVAECGISDQCNASENQVFVGNVVHVVSQLSDSLIMACGGLLPLLASATAPNNDMEIVDPCQQQLPISVSAGFLMRFARLVDTFVLASGVSFSELEQEKNMPAGGVLRQSLRISATVTVRHILASRIQQPDTPRYETNSTKKNQCIMEFVREALEKRSPDGLENVERLVQDSDITRIKGVVYRDMVEENRQAQFLALSVIYLVSVLMVSRYRDILEPPSSPSPFFDSTTQKQENSENVNSETSPENGSNGKLANGGDNLSIKNGIESNGNDGEEEENGEEGQGDDGGRIAAIKVANADMKRGDGNEYDEEELSKMHQSNGRRPSTMMPVQQTAERRAYLTTKLQTALETCAPLLREMMSDFRGYLQKTLLGTHGQEIMNDTKVLETLRNRNASVIELVMLLCSQEWQTSLQKHAGLAFIELVNEGRLMAHATRDHVLRVANEADFILNRLRAEDVSKHAQFEAESREQLAARHEEYGRCDLLIASGRLRDSINATRLLEKMSAILSDQDDSKSGTQFWKLDVWEDDSRRRKRFVPNAYGSRHEEANLPEGEKNEEPEISEQEKIRKVLKGLFSKRQNSSGSHELVDESDIDKWAQEVDPTPSSQSACFSTTAKLIAPGVVVPGTLSVTANDLFFDANESDPNYKKQCAQVLRYCEALHARWNLQEIRAIFLRRYLLQNTALELFLASRTAIMFAFDSEDAVKKVVYQLPRVGVGVKYGLPQSRKTSLMTPRQLFKHSDMCAKWQKREISNFDYLMFLNTVAGRTFNDLSQYPVFPWILTNYTSDTLDLSVASNFRDLSKPIGALSEARRKFFNDRYTSWDDDQVPAFHYGTHYSTPAFTLNWLLRVEPFASMFINLHDGKFDHPDRITHSIKDSWDRCQRDSHDVKELIPELFYLPEMFRNSSKFNLGRRADGTPVDDVVLPPWAESPEHFVLMHRQALESDLVSCQLNQWIDLIFGYKQRGAEAVRATNVFYHLTYEGTVTPKMAETPGQVAAIEQQILSFGQTPSQLLTEAHPPRHSIMSMAPTMFRRHDEDLCMMMKYISNSPVVYLAANTFHQLPQPTVVGVAQNLVFSLNKWDNSYSYGASQRSALSMDPSNAEGQVSLPLTADAQLASAASTTPVARRHLGDAFDQRLTVQCSNFVTTTDSKFIFACGYPDYSFRIVDTDSGRVRQAVYGHGDVVTCIARSETSLFSDCYVVTGSMDCTVVLWHWNGTTGFIAGEYNQPGEVPSPRSILTGHEASISALCVSAEHGLVVSGCEDGVILIHTTSSDLLRRIRGHGIVTQLSMSRECILLSLFDSKRMVTYSATAKKLDEVLVDDKIECVTVTRDGEFAVTGAVNGRINIWRMFPLTKLYTYQPLNSAVRSVAVVASHRFILGGLDSGAIVVFNADFNRWHYEYKHRYIQNTSAAKPVQQSPQK.

Disordered stretches follow at residues 1-109, 1307-1377, and 1629-1649; these read MEIS…PPLP, PSSP…DGGR, and SRHEEANLPEGEKNEEPEISE. The segment covering 24 to 37 has biased composition (acidic residues); it reads PVEEGEEVNDEESN. The segment covering 1317-1340 has biased composition (polar residues); the sequence is TTQKQENSENVNSETSPENGSNGK. The segment covering 1360 to 1372 has biased composition (acidic residues); sequence DGEEEENGEEGQG. The region spanning 1690 to 1798 is the BEACH-type PH domain; the sequence is PSSQSACFST…AVKKVVYQLP (109 aa). Residues 1817-2106 form the BEACH domain; it reads MTPRQLFKHS…QLLTEAHPPR (290 aa). WD repeat units follow at residues 2265–2308, 2326–2365, 2405–2444, and 2447–2486; these read GHGD…GFIA, GHEASISALCVSAEHGLVVSGCEDGVILIHTTSSDLLRRI, LVDDKIECVTVTRDGEFAVTGAVNGRINIWRMFPLTKLYT, and PLNSAVRSVAVVASHRFILGGLDSGAIVVFNADFNRWHYE.

This sequence belongs to the WD repeat neurobeachin family. In terms of assembly, interacts with RII subunit of PKA. As to expression, expressed in vulval precursor cells and rectal epithelia in L2 and L3 larvae. In L4 larvae, expression is seen in intestinal epithelial cells.

The protein localises to the cytoplasm. It localises to the membrane. The protein resides in the nucleus. Its function is as follows. Binds to type II regulatory subunits of protein kinase A and anchors/targets them to the membrane. May anchor the kinase to cytoskeletal and/or organelle-associated proteins. Regulates endosomal traffic in polarized epithelial cells such as the vulval precursor cells and intestinal cells. Thought to act as a negative regulator of lin-12 activity in vulval precursor cells. May have a role in the internalization process from basolateral surface of polarized epithelial cells. The chain is Putative neurobeachin homolog (sel-2) from Caenorhabditis elegans.